A 921-amino-acid polypeptide reads, in one-letter code: cGMP-dependent 3',5'-cyclic phosphodiesterase (921 aa).

The residue at position 1 (Met-1) is an N-acetylmethionine. Disordered stretches follow at residues 1-21 (MRRQ…PPGS) and 177-198 (ESSV…DQKG). Positions 177–188 (ESSVAPEATQNP) are enriched in polar residues. GAF domains lie at 220–357 (DASS…STVL) and 389–528 (DVSV…GISI). 3',5'-cyclic GMP contacts are provided by Ser-411, Asp-426, Ile-445, Tyr-468, and Thr-479. One can recognise a PDEase domain in the interval 558-882 (SDDEYTKLLH…EHWTKVSHKF (325 aa)). His-636 functions as the Proton donor in the catalytic mechanism. Positions 640, 676, 677, and 788 each coordinate Zn(2+). Asp-677 is a Mg(2+) binding site.

It belongs to the cyclic nucleotide phosphodiesterase family. PDE2 subfamily. Homodimer. It depends on Zn(2+) as a cofactor. The cofactor is Mg(2+).

The protein resides in the cell membrane. Its subcellular location is the cytoplasm. It localises to the mitochondrion. It is found in the mitochondrion inner membrane. The protein localises to the mitochondrion outer membrane. It carries out the reaction a nucleoside 3',5'-cyclic phosphate + H2O = a nucleoside 5'-phosphate + H(+). The catalysed reaction is 3',5'-cyclic GMP + H2O = GMP + H(+). It catalyses the reaction 3',5'-cyclic AMP + H2O = AMP + H(+). Its activity is regulated as follows. The 3',5'-cyclic-AMP phosphodiesterase activity is stimulated by 3',5'-cyclic GMP. Its function is as follows. cGMP-activated cyclic nucleotide phosphodiesterase with a dual-specificity for the second messengers cAMP and cGMP, which are key regulators of many important physiological processes. Has a higher efficiency with cGMP compared to cAMP. Plays a role in cell growth and migration. In terms of biological role, regulates mitochondrial cAMP levels and respiration. Involved in the regulation of mitochondria morphology/dynamics and apoptotic cell death via local modulation of cAMP/PKA signaling in the mitochondrion, including the monitoring of local cAMP levels at the outer mitochondrial membrane and of PKA-dependent phosphorylation of DNM1L. This Bos taurus (Bovine) protein is cGMP-dependent 3',5'-cyclic phosphodiesterase.